A 349-amino-acid chain; its full sequence is MNNKLTERQILILKAIINEYISTATAVGSKIILEKYFNNEVSSATIRNEMSVLEKEKYIEKPHTSAGRIPTIKGYQYYEANLAETKISERLKQKLMAILNKRYHSIDEVIEQSVEFINNVTNLPSVITKFKSYDLLKRMDLIKINNNTAIILIVSSSGEVIKKTIKYQNSIQYNDVSTCVQIFNDRLVDTPFIELKEKLTAIKEIVRTKVHEYEFVMQRIVNYIFDINEKSTINIKGTKKLVIHPEFHDHNKLSEILNLLENTSIWEQISFMQQKTGKSVITFGQDIGIEGISVASTLIETEQNKHQIAIVGPNRMEYGKIKGLLNILKEQVEKIDHLNLPLEEINKES.

This sequence belongs to the HrcA family.

In terms of biological role, negative regulator of class I heat shock genes (grpE-dnaK-dnaJ and groELS operons). Prevents heat-shock induction of these operons. This Mycoplasmoides gallisepticum (strain R(low / passage 15 / clone 2)) (Mycoplasma gallisepticum) protein is Heat-inducible transcription repressor HrcA.